A 595-amino-acid polypeptide reads, in one-letter code: Elongation factor 4 (595 aa).

Residues 2–183 form the tr-type G domain; that stretch reads KNIRNFCIIA…AIVEQVPAPA (182 aa). Residues 14–19 and 130–133 contribute to the GTP site; these read DHGKST and NKVD.

This sequence belongs to the TRAFAC class translation factor GTPase superfamily. Classic translation factor GTPase family. LepA subfamily.

Its subcellular location is the cell inner membrane. It carries out the reaction GTP + H2O = GDP + phosphate + H(+). In terms of biological role, required for accurate and efficient protein synthesis under certain stress conditions. May act as a fidelity factor of the translation reaction, by catalyzing a one-codon backward translocation of tRNAs on improperly translocated ribosomes. Back-translocation proceeds from a post-translocation (POST) complex to a pre-translocation (PRE) complex, thus giving elongation factor G a second chance to translocate the tRNAs correctly. Binds to ribosomes in a GTP-dependent manner. The sequence is that of Elongation factor 4 from Porphyromonas gingivalis (strain ATCC BAA-308 / W83).